The sequence spans 457 residues: Proline-specific permease ProY (457 aa).

At 1-17 (MESKNKLKRGLSTRHIR) the chain is on the cytoplasmic side. Helical transmembrane passes span 18–38 (FMAL…DAIK) and 39–59 (MAGP…YIIM). Over 60 to 84 (RALGEMSVHNPAASSFSRYAQENLG) the chain is Cytoplasmic. The chain crosses the membrane as a helical span at residues 85-105 (PLAGYITGWTYCFEILIVAIA). Over 106 to 113 (DVTAFGIY) the chain is Periplasmic. A helical transmembrane segment spans residues 114–134 (MGVWFPTVPHWIWVLSVVLII). Topologically, residues 135 to 156 (CAVNLMSVKVFGELEFWFSFFK) are cytoplasmic. Residues 157 to 177 (VATIIIMIVAGFGIIIWGIGN) traverse the membrane as a helical segment. Over 178 to 197 (GGQPTGIHNLWSNGGFFSNG) the chain is Periplasmic. The chain crosses the membrane as a helical span at residues 198–218 (WLGMVMSLQMVMFAYGGIEII). At 219–242 (GITAGEAKDPEKSIPRAINSVPMR) the chain is on the cytoplasmic side. Residues 243–263 (ILVFYVGTLFVIMSIYPWNQV) form a helical membrane-spanning segment. At 264–277 (GTAGSPFVLTFQHM) the chain is on the periplasmic side. A helical membrane pass occupies residues 278-298 (GITFAASILNFVVLTASLSAI). At 299–331 (NSDVFGVGRMLHGMAEQGSAPKIFSKTSRRGIP) the chain is on the cytoplasmic side. Residues 332–352 (WVTVLVMTTALLFAVYLNYIM) traverse the membrane as a helical segment. Residues 353-355 (PEN) lie on the Periplasmic side of the membrane. Residues 356–376 (VFLVIASLATFATVWVWIMIL) traverse the membrane as a helical segment. Topologically, residues 377–399 (LSQIAFRRRLPPEEVKALKFKVP) are cytoplasmic. The helical transmembrane segment at 400 to 420 (GGVATTIGGLIFLLFIIGLIG) threads the bilayer. Residues 421–424 (YHPD) are Periplasmic-facing. Residues 425–445 (TRISLYVGFAWIVVLLIGWMF) form a helical membrane-spanning segment. The Cytoplasmic segment spans residues 446-457 (KRRHDRQLAENQ).

Belongs to the amino acid-polyamine-organocation (APC) superfamily. Amino acid transporter (AAT) (TC 2.A.3.1) family.

The protein resides in the cell inner membrane. In terms of biological role, permease that is involved in the transport across the cytoplasmic membrane of proline. The chain is Proline-specific permease ProY (proY) from Escherichia coli O157:H7.